The sequence spans 292 residues: NIF3-like protein 1 (292 aa).

Belongs to the GTP cyclohydrolase I type 2/NIF3 family.

This Drosophila melanogaster (Fruit fly) protein is NIF3-like protein 1 (anon-35F/36A).